A 117-amino-acid polypeptide reads, in one-letter code: UPF0344 protein GK0697 (117 aa).

4 consecutive transmembrane segments (helical) span residues 1–21, 39–59, 60–80, and 97–117; these read MTHA…LAVS, LFYI…ASIS, ALYW…EMVL, and VIAL…FDLF.

Belongs to the UPF0344 family.

It localises to the cell membrane. This Geobacillus kaustophilus (strain HTA426) protein is UPF0344 protein GK0697.